Here is a 217-residue protein sequence, read N- to C-terminus: Thymidylate kinase (217 aa).

An ATP-binding site is contributed by 16–23; sequence GIDGAGKT.

Belongs to the thymidylate kinase family.

The catalysed reaction is dTMP + ATP = dTDP + ADP. Phosphorylation of dTMP to form dTDP in both de novo and salvage pathways of dTTP synthesis. This chain is Thymidylate kinase, found in Xylella fastidiosa (strain M23).